Here is a 150-residue protein sequence, read N- to C-terminus: Aspartate 1-decarboxylase (150 aa).

Ser25 serves as the catalytic Schiff-base intermediate with substrate; via pyruvic acid. At Ser25 the chain carries Pyruvic acid (Ser). Residue Thr57 participates in substrate binding. The active-site Proton donor is the Tyr58. A substrate-binding site is contributed by 73–75 (GAA).

Belongs to the PanD family. In terms of assembly, heterooctamer of four alpha and four beta subunits. Pyruvate is required as a cofactor. In terms of processing, is synthesized initially as an inactive proenzyme, which is activated by self-cleavage at a specific serine bond to produce a beta-subunit with a hydroxyl group at its C-terminus and an alpha-subunit with a pyruvoyl group at its N-terminus.

It is found in the cytoplasm. The enzyme catalyses L-aspartate + H(+) = beta-alanine + CO2. Its pathway is cofactor biosynthesis; (R)-pantothenate biosynthesis; beta-alanine from L-aspartate: step 1/1. Its function is as follows. Catalyzes the pyruvoyl-dependent decarboxylation of aspartate to produce beta-alanine. In Kocuria rhizophila (strain ATCC 9341 / DSM 348 / NBRC 103217 / DC2201), this protein is Aspartate 1-decarboxylase.